Here is a 141-residue protein sequence, read N- to C-terminus: Large ribosomal subunit protein uL11 (141 aa).

The protein belongs to the universal ribosomal protein uL11 family. In terms of assembly, part of the ribosomal stalk of the 50S ribosomal subunit. Interacts with L10 and the large rRNA to form the base of the stalk. L10 forms an elongated spine to which L12 dimers bind in a sequential fashion forming a multimeric L10(L12)X complex. Post-translationally, one or more lysine residues are methylated.

Functionally, forms part of the ribosomal stalk which helps the ribosome interact with GTP-bound translation factors. This Gloeothece citriformis (strain PCC 7424) (Cyanothece sp. (strain PCC 7424)) protein is Large ribosomal subunit protein uL11.